The primary structure comprises 360 residues: Venom serine protease Bi-VSP (360 aa).

The N-terminal stretch at 1-26 (MTGSKMLFACLALIAFLHPLVHVASA) is a signal peptide. Positions 27–113 (QECTTPNNKA…CGFSNVSHTR (87 aa)) are excised as a propeptide. Residues 28 to 79 (ECTTPNNKAGKCLGIRVCKPLLEMLQTQGHAAADFLRQSVCKYENNNPIVCC) form the Clip domain. Intrachain disulfides connect Cys29/Cys78, Cys39/Cys68, Cys45/Cys79, Cys104/Cys230, Cys147/Cys163, Cys278/Cys296, and Cys307/Cys335. N-linked (GlcNAc...) asparagine glycosylation occurs at Asn108. The Peptidase S1 domain maps to 114–360 (VVGGKPAVLG…LDDFILPAMQ (247 aa)). The active-site Charge relay system is the His162. Residues Asp176, Asn178, Arg181, and Asp184 each contribute to the Ca(2+) site. Residue Asp210 is the Charge relay system of the active site. Ser311 functions as the Charge relay system in the catalytic mechanism.

This sequence belongs to the peptidase S1 family. CLIP subfamily. As to expression, expressed by the venom gland.

The protein localises to the secreted. Functionally, multifunctional venom serine protease. In insects, it acts as an arthropod prophenoloxidase-activating factor, thereby triggering the phenoloxidase cascade. When injected into larvae, it induces a lethal melanization response in target insects by modulating the innate immune response. In mammals, it converts fibrinogen into fibrin, activates prothrombin, and also degrades fibrin. In mammal, it may act in a cooperative manner with the serine protease inhibitor Bi-KTI (AC G3LH89) to promote the spread of bee venom under anti-bleeding conditions. The polypeptide is Venom serine protease Bi-VSP (Bombus ignitus (Bumblebee)).